The chain runs to 509 residues: Aldehyde dehydrogenase 1A1 (509 aa).

Residues Ile-175 to Asn-178, Lys-201 to Glu-204, Gly-234 to Pro-235, Gly-254 to Ser-255, and Glu-277 to Gly-279 each bind NAD(+). Glu-277 functions as the Proton acceptor in the catalytic mechanism. Cys-311 serves as the catalytic Nucleophile. NAD(+)-binding positions include Glu-357 to Lys-361 and Glu-408 to Phe-410.

This sequence belongs to the aldehyde dehydrogenase family. As to quaternary structure, homotetramer.

Its subcellular location is the cytoplasm. The protein resides in the cytosol. The protein localises to the cell projection. It is found in the axon. It carries out the reaction an aldehyde + NAD(+) + H2O = a carboxylate + NADH + 2 H(+). It catalyses the reaction all-trans-retinal + NAD(+) + H2O = all-trans-retinoate + NADH + 2 H(+). The catalysed reaction is 9-cis-retinal + NAD(+) + H2O = 9-cis-retinoate + NADH + 2 H(+). The enzyme catalyses 11-cis-retinal + NAD(+) + H2O = 11-cis-retinoate + NADH + 2 H(+). It carries out the reaction 13-cis-retinal + NAD(+) + H2O = 13-cis-retinoate + NADH + 2 H(+). It catalyses the reaction 3-deoxyglucosone + NAD(+) + H2O = 2-dehydro-3-deoxy-D-gluconate + NADH + 2 H(+). The catalysed reaction is (E)-4-hydroxynon-2-enal + NAD(+) + H2O = (E)-4-hydroxynon-2-enoate + NADH + 2 H(+). The enzyme catalyses malonaldehyde + NAD(+) + H2O = 3-oxopropanoate + NADH + 2 H(+). It carries out the reaction hexanal + NAD(+) + H2O = hexanoate + NADH + 2 H(+). It catalyses the reaction propanal + NAD(+) + H2O = propanoate + NADH + 2 H(+). The catalysed reaction is acetaldehyde + NAD(+) + H2O = acetate + NADH + 2 H(+). The enzyme catalyses benzaldehyde + NAD(+) + H2O = benzoate + NADH + 2 H(+). It carries out the reaction 4-aminobutanal + NAD(+) + H2O = 4-aminobutanoate + NADH + 2 H(+). It functions in the pathway cofactor metabolism; retinol metabolism. Cytosolic dehydrogenase that catalyzes the irreversible oxidation of a wide range of aldehydes to their corresponding carboxylic acid. Functions downstream of retinol dehydrogenases and catalyzes the oxidation of retinaldehyde into retinoic acid, the second step in the oxidation of retinol/vitamin A into retinoic acid. This pathway is crucial to control the levels of retinol and retinoic acid, two important molecules which excess can be teratogenic and cytotoxic. Also oxidizes aldehydes resulting from lipid peroxidation like (E)-4-hydroxynon-2-enal/HNE, malonaldehyde and hexanal that form protein adducts and are highly cytotoxic. By participating for instance to the clearance of (E)-4-hydroxynon-2-enal/HNE in the lens epithelium prevents the formation of HNE-protein adducts and lens opacification. Also functions downstream of fructosamine-3-kinase in the fructosamine degradation pathway by catalyzing the oxidation of 3-deoxyglucosone, the carbohydrate product of fructosamine 3-phosphate decomposition, which is itself a potent glycating agent that may react with lysine and arginine side-chains of proteins. Also has an aminobutyraldehyde dehydrogenase activity and is probably part of an alternative pathway for the biosynthesis of GABA/4-aminobutanoate in midbrain, thereby playing a role in GABAergic synaptic transmission. The chain is Aldehyde dehydrogenase 1A1 from Gallus gallus (Chicken).